Consider the following 325-residue polypeptide: MEIFDYDNVLLLPRKCRVESRSECDASVTLGQRSFRLPVVPANMKTVVDEKICRWLASNGYFYVMHRFDLDNVQFVRDMHAAGCFASISLGVKQPDYDTVDRLVAEGLCPEYITIDIAHGHADTVKAMIAYLKQHLPQAFVIAGNVATPEAIIDLENWGADATKVGVGPGKVCITKLKTGFGTGGWQLSALKWCARVATKPIIADGGIRSHGDIAKSIRFGATMVMIGSLFAGHEESPGKTVEVDGEQFKEYYGSASDFNKGEYKHVEGKRILEPIKGRLADTLVEMEQDVQSSISYSGGRRLMDIRKVNYVILGGDNAGEHLLM.

Residue Cys-173 is the Thioimidate intermediate of the active site. Position 202-225 (202-225 (IIADGGIRSHGDIAKSIRFGATMV)) interacts with NADP(+).

The protein belongs to the IMPDH/GMPR family. GuaC type 2 subfamily.

The catalysed reaction is IMP + NH4(+) + NADP(+) = GMP + NADPH + 2 H(+). Catalyzes the irreversible NADPH-dependent deamination of GMP to IMP. It functions in the conversion of nucleobase, nucleoside and nucleotide derivatives of G to A nucleotides, and in maintaining the intracellular balance of A and G nucleotides. This Paracidovorax citrulli (strain AAC00-1) (Acidovorax citrulli) protein is GMP reductase.